Reading from the N-terminus, the 196-residue chain is Flagellin B2 (196 aa).

Residues Met-1 to Gly-12 constitute a propeptide that is removed on maturation.

Belongs to the archaeal flagellin family. Post-translationally, glycosylated.

Its subcellular location is the archaeal flagellum. Its function is as follows. Flagellin is the subunit protein which polymerizes to form the filaments of archaeal flagella. The polypeptide is Flagellin B2 (flaB2) (Halobacterium salinarum (strain ATCC 700922 / JCM 11081 / NRC-1) (Halobacterium halobium)).